A 402-amino-acid polypeptide reads, in one-letter code: Dynactin subunit 2 (402 aa).

Positions 1 to 24 (MADPKYADLPGIARNEPDVYETSD) are disordered. Position 2 is an N-acetylalanine (A2). Position 6 is a phosphotyrosine (Y6). S83 is modified (phosphoserine). Y86 is modified (phosphotyrosine). A coiled-coil region spans residues 100 to 130 (QQKYQRLLHEVQELTTEVEKIKTTVKESATE). T134 and T199 each carry phosphothreonine. The interval 185–205 (KSSKGSSGGKSTGGTPPDSSL) is disordered. The stretch at 215-247 (EQDKFSQAAKVAELEKRLTELEATVRCDQDAQN) forms a coiled coil. S321 carries the phosphoserine modification.

This sequence belongs to the dynactin subunit 2 family. Subunit of dynactin, a multiprotein complex part of a tripartite complex with dynein and a adapter, such as BICDL1, BICD2 or HOOK3. The dynactin complex is built around ACTR1A/ACTB filament and consists of an actin-related filament composed of a shoulder domain, a pointed end and a barbed end. Its length is defined by its flexible shoulder domain. The soulder is composed of 2 DCTN1 subunits, 4 DCTN2 and 2 DCTN3. The 4 DCNT2 (via N-terminus) bind the ACTR1A filament and act as molecular rulers to determine the length. The pointed end is important for binding dynein-dynactin cargo adapters and consists of 4 subunits: ACTR10, DCNT4, DCTN5 and DCTN6. The barbed end is composed of a CAPZA1:CAPZB heterodimers, which binds ACTR1A/ACTB filament and dynactin and stabilizes dynactin. Interacts with BICD2 and CEP135. Interacts with DYNAP. Interacts with ECPAS. Interacts with MAPRE1.

Its subcellular location is the cytoplasm. The protein localises to the cytoskeleton. The protein resides in the microtubule organizing center. It is found in the centrosome. It localises to the membrane. Part of the dynactin complex that activates the molecular motor dynein for ultra-processive transport along microtubules. In the dynactin soulder domain, binds the ACTR1A filament and acts as a molecular ruler to determine the length. Modulates cytoplasmic dynein binding to an organelle, and plays a role in prometaphase chromosome alignment and spindle organization during mitosis. Involved in anchoring microtubules to centrosomes. May play a role in synapse formation during brain development. In Rattus norvegicus (Rat), this protein is Dynactin subunit 2 (Dctn2).